The chain runs to 209 residues: Uracil phosphoribosyltransferase (209 aa).

Residues Arg-79, Arg-104, and 131 to 139 contribute to the 5-phospho-alpha-D-ribose 1-diphosphate site; that span reads DPMLATGNS. Uracil-binding positions include Ile-194 and 199-201; that span reads GDA. 5-phospho-alpha-D-ribose 1-diphosphate is bound at residue Asp-200.

It belongs to the UPRTase family. Mg(2+) is required as a cofactor.

The catalysed reaction is UMP + diphosphate = 5-phospho-alpha-D-ribose 1-diphosphate + uracil. Its pathway is pyrimidine metabolism; UMP biosynthesis via salvage pathway; UMP from uracil: step 1/1. With respect to regulation, allosterically activated by GTP. Its function is as follows. Catalyzes the conversion of uracil and 5-phospho-alpha-D-ribose 1-diphosphate (PRPP) to UMP and diphosphate. This chain is Uracil phosphoribosyltransferase, found in Sinorhizobium medicae (strain WSM419) (Ensifer medicae).